The sequence spans 365 residues: Flagellar P-ring protein (365 aa).

A signal peptide spans 1-22 (MSVRRFLVWILALTVGAAPVMA).

Belongs to the FlgI family. As to quaternary structure, the basal body constitutes a major portion of the flagellar organelle and consists of four rings (L,P,S, and M) mounted on a central rod.

Its subcellular location is the periplasm. It is found in the bacterial flagellum basal body. In terms of biological role, assembles around the rod to form the L-ring and probably protects the motor/basal body from shearing forces during rotation. This is Flagellar P-ring protein from Marinobacter nauticus (strain ATCC 700491 / DSM 11845 / VT8) (Marinobacter aquaeolei).